The sequence spans 260 residues: HTH-type transcriptional repressor NanR (260 aa).

Positions 1–22 are disordered; sequence MNAFDSQAEDSPTSLGRSLRRR. The HTH gntR-type domain occupies 27 to 95; it reads KKLSEMVEEE…NGERARVSRP (69 aa). The H-T-H motif DNA-binding region spans 55-74; sequence ERELMAFFNVGRPSVREALA.

The protein belongs to the NanR family.

Transcriptional repressor that controls expression of the genes required for the catabolism of sialic acids. The protein is HTH-type transcriptional repressor NanR of Salmonella newport (strain SL254).